The chain runs to 268 residues: Hydroxyethylthiazole kinase (268 aa).

M47 contributes to the substrate binding site. K123 and T170 together coordinate ATP. Residue A196 coordinates substrate.

This sequence belongs to the Thz kinase family. Mg(2+) is required as a cofactor.

It catalyses the reaction 5-(2-hydroxyethyl)-4-methylthiazole + ATP = 4-methyl-5-(2-phosphooxyethyl)-thiazole + ADP + H(+). Its pathway is cofactor biosynthesis; thiamine diphosphate biosynthesis; 4-methyl-5-(2-phosphoethyl)-thiazole from 5-(2-hydroxyethyl)-4-methylthiazole: step 1/1. Its function is as follows. Catalyzes the phosphorylation of the hydroxyl group of 4-methyl-5-beta-hydroxyethylthiazole (THZ). This is Hydroxyethylthiazole kinase from Finegoldia magna (strain ATCC 29328 / DSM 20472 / WAL 2508) (Peptostreptococcus magnus).